Here is a 205-residue protein sequence, read N- to C-terminus: Hydrogenase-4 component A (205 aa).

4 consecutive 4Fe-4S ferredoxin-type domains span residues 2-31, 41-72, 73-102, and 140-172; these read NRFV…TQGL, KTST…SQRD, DAIQ…ASGS, and QTVA…LITG. Cys12, Cys15, Cys18, Cys22, Cys51, Cys54, Cys59, Cys63, Cys82, Cys85, Cys88, Cys92, Cys146, Cys149, Cys158, and Cys162 together coordinate [4Fe-4S] cluster.

[4Fe-4S] cluster is required as a cofactor.

In terms of biological role, probable electron transfer protein for hydrogenase 4. This is Hydrogenase-4 component A from Escherichia coli (strain K12).